Here is a 544-residue protein sequence, read N- to C-terminus: O-phosphoserine--tRNA(Cys) ligase (544 aa).

Residues 194-196, 239-241, 281-282, and asparagine 335 contribute to the substrate site; these read HMT, SAS, and YY.

Belongs to the class-II aminoacyl-tRNA synthetase family. O-phosphoseryl-tRNA(Cys) synthetase subfamily. Homotetramer. Interacts with SepCysS.

It catalyses the reaction tRNA(Cys) + O-phospho-L-serine + ATP = O-phospho-L-seryl-tRNA(Cys) + AMP + diphosphate. Its function is as follows. Catalyzes the attachment of O-phosphoserine (Sep) to tRNA(Cys). The polypeptide is O-phosphoserine--tRNA(Cys) ligase (Methanopyrus kandleri (strain AV19 / DSM 6324 / JCM 9639 / NBRC 100938)).